Here is a 485-residue protein sequence, read N- to C-terminus: Glucagon receptor (485 aa).

An N-terminal signal peptide occupies residues 1 to 26; sequence MLLTQLHCPYLLLLLVVLSCLPKAPS. The Extracellular segment spans residues 27–137; it reads AQVMDFLFEK…EIEVQKGVAK (111 aa). 3 cysteine pairs are disulfide-bonded: C44–C68, C59–C101, and C82–C122. Residues N47, N60, N75, and N79 are each glycosylated (N-linked (GlcNAc...) asparagine). The chain crosses the membrane as a helical span at residues 138-162; sequence MYSSYQVMYTVGYSLSLGALLLALV. Topologically, residues 163-174 are cytoplasmic; the sequence is ILLGLRKLHCTR. Residues 175 to 199 traverse the membrane as a helical segment; it reads NYIHGNLFASFVLKAGSVLVIDWLL. Topologically, residues 200 to 226 are extracellular; the sequence is KTRYSQKIGDDLSVSVWLSDGAVAGCR. A disulfide bond links C225 and C295. The chain crosses the membrane as a helical span at residues 227 to 250; that stretch reads VATVIMQYGIIANYCWLLVEGVYL. The Cytoplasmic segment spans residues 251–264; it reads YSLLSITTFSEKSF. The helical transmembrane segment at 265–286 threads the bilayer; that stretch reads FSLYLCIGWGSPLLFVIPWVVV. Over 287–304 the chain is Extracellular; that stretch reads KCLFENVQCWTSNDNMGF. Residues 305-327 form a helical membrane-spanning segment; the sequence is WWILRIPVLLAILINFFIFVRII. Topologically, residues 328–351 are cytoplasmic; that stretch reads HLLVAKLRAHQMHYADYKFRLARS. The tract at residues 351–354 is important for allosteric inhibitor binding; that stretch reads STLT. Residues 352-370 form a helical membrane-spanning segment; sequence TLTLIPLLGVHEVVFAFVT. The Extracellular segment spans residues 371 to 382; the sequence is DEHAQGTLRSTK. The chain crosses the membrane as a helical span at residues 383 to 403; that stretch reads LFFDLFFSSFQGLLVAVLYCF. The Cytoplasmic segment spans residues 404 to 485; it reads LNKEVQAELL…SLPRLADSPT (82 aa). A disordered region spans residues 455-485; the sequence is MSAGSSSGTGCEPSAKTSLASSLPRLADSPT. A compositionally biased stretch (polar residues) spans 456 to 475; it reads SAGSSSGTGCEPSAKTSLAS. A phosphoserine mark is found at S460 and S476.

This sequence belongs to the G-protein coupled receptor 2 family. In terms of processing, ligand-binding promotes phosphorylation of serine residues in the C-terminal cytoplasmic domain. Phosphorylation is important for receptor endocytosis after ligand-binding.

The protein resides in the cell membrane. Its function is as follows. G-protein coupled receptor for glucagon that plays a central role in the regulation of blood glucose levels and glucose homeostasis. Regulates the rate of hepatic glucose production by promoting glycogen hydrolysis and gluconeogenesis. Plays an important role in mediating the responses to fasting. Ligand binding causes a conformation change that triggers signaling via guanine nucleotide-binding proteins (G proteins) and modulates the activity of down-stream effectors, such as adenylate cyclase. Promotes activation of adenylate cyclase. Besides, plays a role in signaling via a phosphatidylinositol-calcium second messenger system. The sequence is that of Glucagon receptor (Gcgr) from Rattus norvegicus (Rat).